Consider the following 331-residue polypeptide: MSRYLLPLSALGTVAGAAVLLKDYVTGGACPSKATIPGKTVIVTGANTGIGKQTALELARRGGNIILACRDMEKCEAAAKDIRGETLNHHVNARHLDLASLKSIREFAAKIIEEEERVDILINNAGVMRCPHWTTEDGFEMQFGVNHLGHFLLTNLLLDKLKASAPSRIINLSSLAHVAGHIDFDDLNWQTRKYNTKAAYCQSKLAIVLFTKELSRRLQGSGVTVNALHPGVARTELGRHTGIHGSTFSSTTLGPIFWLLVKSPELAAQPSTYLAVAEELADVSGKYFDGLKQKAPAPEAEDEEVARRLWAESARLVGLEAPSVREQPLPR.

Serine 2 carries the N-acetylserine modification. 45 to 51 (GANTGIG) serves as a coordination point for NADP(+). Serine 174 contributes to the substrate binding site. Tyrosine 200 serves as the catalytic Proton acceptor. Phosphoserine is present on serine 323.

The protein belongs to the short-chain dehydrogenases/reductases (SDR) family. As to expression, widely expressed. In the retina, detected in the inner segment of the photoreceptor cells. Weak signals are observed in a small population of inner nuclear neurons and the inner plexiform layer.

It localises to the mitochondrion inner membrane. It catalyses the reaction all-trans-retinol + NADP(+) = all-trans-retinal + NADPH + H(+). Its pathway is cofactor metabolism; retinol metabolism. Functionally, retinol dehydrogenase with a clear preference for NADP. Oxidizes all-trans-retinol, but seems to reduce all-trans-retinal with much higher efficiency. Has no activity toward steroids. The sequence is that of Retinol dehydrogenase 13 (RDH13) from Homo sapiens (Human).